The chain runs to 67 residues: ATP synthase protein 8 (67 aa).

The chain crosses the membrane as a helical span at residues 8–24; that stretch reads TWFITILSMLMTLFILF. Lys54 is subject to N6-acetyllysine; alternate. Lys54 is modified (N6-succinyllysine; alternate). The residue at position 57 (Lys57) is an N6-acetyllysine.

It belongs to the ATPase protein 8 family. As to quaternary structure, F-type ATPases have 2 components, CF(1) - the catalytic core - and CF(0) - the membrane proton channel. Component of an ATP synthase complex composed of ATP5PB, ATP5MC1, ATP5F1E, ATP5PD, ATP5ME, ATP5PF, ATP5MF, MT-ATP6, MT-ATP8, ATP5F1A, ATP5F1B, ATP5F1D, ATP5F1C, ATP5PO, ATP5MG, ATP5MK and ATP5MJ. Interacts with PRICKLE3.

Its subcellular location is the mitochondrion membrane. Functionally, mitochondrial membrane ATP synthase (F(1)F(0) ATP synthase or Complex V) produces ATP from ADP in the presence of a proton gradient across the membrane which is generated by electron transport complexes of the respiratory chain. F-type ATPases consist of two structural domains, F(1) - containing the extramembraneous catalytic core and F(0) - containing the membrane proton channel, linked together by a central stalk and a peripheral stalk. During catalysis, ATP synthesis in the catalytic domain of F(1) is coupled via a rotary mechanism of the central stalk subunits to proton translocation. Part of the complex F(0) domain. Minor subunit located with subunit a in the membrane. The protein is ATP synthase protein 8 (MT-ATP8) of Vicugna pacos (Alpaca).